We begin with the raw amino-acid sequence, 386 residues long: Alanine racemase (386 aa).

Lys48 serves as the catalytic Proton acceptor; specific for D-alanine. The residue at position 48 (Lys48) is an N6-(pyridoxal phosphate)lysine. Arg147 provides a ligand contact to substrate. Tyr279 (proton acceptor; specific for L-alanine) is an active-site residue. Residue Met327 coordinates substrate.

The protein belongs to the alanine racemase family. It depends on pyridoxal 5'-phosphate as a cofactor.

The enzyme catalyses L-alanine = D-alanine. The protein operates within amino-acid biosynthesis; D-alanine biosynthesis; D-alanine from L-alanine: step 1/1. Catalyzes the interconversion of L-alanine and D-alanine. May also act on other amino acids. The polypeptide is Alanine racemase (alr) (Prochlorococcus marinus (strain SARG / CCMP1375 / SS120)).